The following is a 647-amino-acid chain: Threonine--tRNA ligase (647 aa).

Positions Met1–Thr61 constitute a TGS domain. Residues Asp242–Pro540 are catalytic. Residues Cys336, His387, and His517 each coordinate Zn(2+).

This sequence belongs to the class-II aminoacyl-tRNA synthetase family. As to quaternary structure, homodimer. It depends on Zn(2+) as a cofactor.

It is found in the cytoplasm. The catalysed reaction is tRNA(Thr) + L-threonine + ATP = L-threonyl-tRNA(Thr) + AMP + diphosphate + H(+). Functionally, catalyzes the attachment of threonine to tRNA(Thr) in a two-step reaction: L-threonine is first activated by ATP to form Thr-AMP and then transferred to the acceptor end of tRNA(Thr). Also edits incorrectly charged L-seryl-tRNA(Thr). The chain is Threonine--tRNA ligase from Streptococcus pneumoniae serotype 4 (strain ATCC BAA-334 / TIGR4).